The following is a 310-amino-acid chain: Glutamyl-Q tRNA(Asp) synthetase (310 aa).

Residues R24 to S28 and E60 each bind L-glutamate. Positions P27–S37 match the 'HIGH' region motif. C116, C118, Y130, and C134 together coordinate Zn(2+). Y187 and R205 together coordinate L-glutamate. The short motif at K243 to Q247 is the 'KMSKS' region element. K246 contributes to the ATP binding site.

It belongs to the class-I aminoacyl-tRNA synthetase family. GluQ subfamily. Requires Zn(2+) as cofactor.

Catalyzes the tRNA-independent activation of glutamate in presence of ATP and the subsequent transfer of glutamate onto a tRNA(Asp). Glutamate is transferred on the 2-amino-5-(4,5-dihydroxy-2-cyclopenten-1-yl) moiety of the queuosine in the wobble position of the QUC anticodon. The polypeptide is Glutamyl-Q tRNA(Asp) synthetase (Photobacterium profundum (strain SS9)).